The following is a 500-amino-acid chain: AAA-ATPase At3g28580 (500 aa).

The chain crosses the membrane as a helical span at residues 7–29 (LWTNTGSALATLMFVYTIFKQFF). The segment at 174-193 (NRERKLYSNTPGQSHGNNSK) is disordered. Over residues 180 to 193 (YSNTPGQSHGNNSK) the composition is skewed to polar residues. 247 to 254 (GPPGTGKS) serves as a coordination point for ATP. The segment at 462-500 (KEEAKKKVEEEEEEKQRKKEKVKEIEAEKEKKKKIEEEN) is disordered.

It belongs to the AAA ATPase family. BCS1 subfamily. Requires Mg(2+) as cofactor.

The protein localises to the membrane. It catalyses the reaction ATP + H2O = ADP + phosphate + H(+). In Arabidopsis thaliana (Mouse-ear cress), this protein is AAA-ATPase At3g28580.